The sequence spans 1439 residues: Histone-lysine N-methyltransferase NSD3 (1439 aa).

Residues 121–151 are disordered; that stretch reads PHEILEKPSPPQPPPPPSVPQTVIPKKTGSP. Positions 128–139 are enriched in pro residues; sequence PSPPQPPPPPSV. Serine 150 is subject to Phosphoserine. The KIKL motif lies at 154–157; the sequence is KLKI. Residues 181–247 form a disordered region; it reads QASEHTKSKH…PREEPVLKEA (67 aa). The segment covering 187–201 has biased composition (basic residues); sequence KSKHESRKEKRKKSN. The span at 202 to 244 shows a compositional bias: basic and acidic residues; it reads RHESSRSEERRSHKIPKLEPEGQNRPNERVDTAPEKPREEPVL. Residues lysine 218 and lysine 245 each participate in a glycyl lysine isopeptide (Lys-Gly) (interchain with G-Cter in SUMO2) cross-link. Residues 270 to 333 form the PWWP 1 domain; the sequence is VGDLVWSKVG…EKRVREYKGH (64 aa). 2 disordered regions span residues 344-367 and 401-466; these read AKQASNHSEKQKIRKPRPQRERAQ and EASS…PPPV. Polar residues-rich tracts occupy residues 401 to 413 and 425 to 445; these read EASSQAKKNVTSK and VLNSQPEQTNAGEVASSQSST. A Glycyl lysine isopeptide (Lys-Gly) (interchain with G-Cter in SUMO2) cross-link involves residue lysine 413. Serine 457 is modified (phosphoserine). Residues lysine 502 and lysine 532 each participate in a glycyl lysine isopeptide (Lys-Gly) (interchain with G-Cter in SUMO2) cross-link. The tract at residues 540–695 is disordered; it reads QDRLIISSPS…VDSSLSRRGV (156 aa). The span at 546 to 568 shows a compositional bias: polar residues; it reads SSPSQRSEKPAQSASSPEATSGS. The span at 583-595 shows a compositional bias: basic and acidic residues; it reads TRSESEKSAEVVP. 3 positions are modified to phosphoserine: serine 585, serine 587, and serine 590. A Glycyl lysine isopeptide (Lys-Gly) (interchain with G-Cter in SUMO2) cross-link involves residue lysine 628. Residues 637 to 648 are compositionally biased toward polar residues; the sequence is STDVETASCTYR. Residue serine 655 is modified to Phosphoserine. The span at 670–691 shows a compositional bias: low complexity; that stretch reads DSPSATADADASDAQSVDSSLS. 3 PHD-type zinc fingers span residues 701-748, 749-805, and 862-955; these read DTVC…CETG, QHPC…CSME, and VGFC…CKAG. Lysine 790 is subject to N6-acetyllysine. Residues 960-1025 enclose the PWWP 2 domain; that stretch reads YKQIVWVKLG…QGRVFPYVEG (66 aa). The stretch at 1036–1065 forms a coiled coil; the sequence is INKTFKKALEEAAKRFQELKAQRESKEALE. An AWS domain is found at 1096–1146; it reads SEIPRCNCKPGDENPCGLESQCLNRMSQYECHPQVCPAGDRCQNQCFTKRL. One can recognise an SET domain in the interval 1148–1265; sequence PDAEVIKTER…AGMELTFNYN (118 aa). Lysine 1154 is covalently cross-linked (Glycyl lysine isopeptide (Lys-Gly) (interchain with G-Cter in SUMO2)). Positions 1272–1288 constitute a Post-SET domain; sequence GRTVCHCGADNCSGFLG. The segment at 1323–1370 adopts a PHD-type 4; atypical zinc-finger fold; that stretch reads EDYCFQCGDGGELVMCDKKDCPKAYHLLCLNLTQPPHGKWECPWHRCD.

It belongs to the class V-like SAM-binding methyltransferase superfamily. Histone-lysine methyltransferase family. SET2 subfamily. As to quaternary structure, interacts with BRD4. Interacts (via KIKL motif) with BRD3 (via NET domain).

It is found in the nucleus. Its subcellular location is the chromosome. The enzyme catalyses L-lysyl(4)-[histone H3] + 2 S-adenosyl-L-methionine = N(6),N(6)-dimethyl-L-lysyl(4)-[histone H3] + 2 S-adenosyl-L-homocysteine + 2 H(+). It catalyses the reaction L-lysyl(27)-[histone H3] + 2 S-adenosyl-L-methionine = N(6),N(6)-dimethyl-L-lysyl(27)-[histone H3] + 2 S-adenosyl-L-homocysteine + 2 H(+). Functionally, histone methyltransferase. Preferentially dimethylates 'Lys-4' and 'Lys-27' of histone H3 forming H3K4me2 and H3K27me2. H3 'Lys-4' methylation represents a specific tag for epigenetic transcriptional activation, while 'Lys-27' is a mark for transcriptional repression. The polypeptide is Histone-lysine N-methyltransferase NSD3 (Nsd3) (Mus musculus (Mouse)).